A 155-amino-acid polypeptide reads, in one-letter code: Large ribosomal subunit protein eL19 (155 aa).

The span at 66–84 (VRHLQRRKGRRRGMGRRKG) shows a compositional bias: basic residues. Residues 66–85 (VRHLQRRKGRRRGMGRRKGV) are disordered.

Belongs to the eukaryotic ribosomal protein eL19 family. In terms of assembly, part of the 50S ribosomal subunit.

In terms of biological role, binds to the 23S rRNA. The polypeptide is Large ribosomal subunit protein eL19 (Aeropyrum pernix (strain ATCC 700893 / DSM 11879 / JCM 9820 / NBRC 100138 / K1)).